A 442-amino-acid polypeptide reads, in one-letter code: Putative ammonium transporter sll1017 (442 aa).

Helical transmembrane passes span 5 to 25 (NFPLARYVLGAMLAFLFVGVA), 44 to 64 (LFLLAAAVLVLFMQAGFAMLE), 81 to 101 (TFDVCVGVLLYFLFGYSLMYG), 104 to 124 (PVLGGFFGWGGFGITNNLDNV), 133 to 153 (WLFQAAFAATAATIVSGAVMG), 155 to 175 (MYFKAYLIYSAVITGLVYPIS), 193 to 213 (FAGSLLVHSVGGFAALAAVVV), 240 to 260 (GVFILWVGWYGFNPGSQLAFV), 269 to 289 (MLIAVNTTLSAAAGGLAALAF), 299 to 319 (PNLLVTLNGILGGLVGITAGC), 325 to 345 (WSAIAIGVVAGILSVLGTKLL), 354 to 374 (VGAWPVHGLCGIWGGIAVGIF), and 386 to 406 (IVGSLVIPFWAFITMFFLFYV).

It belongs to the ammonia transporter channel (TC 1.A.11.2) family.

It localises to the cell membrane. This Synechocystis sp. (strain ATCC 27184 / PCC 6803 / Kazusa) protein is Putative ammonium transporter sll1017.